Consider the following 232-residue polypeptide: Ribose-5-phosphate isomerase A (232 aa).

Residues 31 to 34, 87 to 90, and 100 to 103 each bind substrate; these read TGST, DGAD, and KGGG. Residue glutamate 109 is the Proton acceptor of the active site. Lysine 127 serves as a coordination point for substrate.

Belongs to the ribose 5-phosphate isomerase family. As to quaternary structure, homodimer.

It catalyses the reaction aldehydo-D-ribose 5-phosphate = D-ribulose 5-phosphate. It participates in carbohydrate degradation; pentose phosphate pathway; D-ribose 5-phosphate from D-ribulose 5-phosphate (non-oxidative stage): step 1/1. Functionally, catalyzes the reversible conversion of ribose-5-phosphate to ribulose 5-phosphate. The protein is Ribose-5-phosphate isomerase A of Bifidobacterium longum subsp. infantis (strain ATCC 15697 / DSM 20088 / JCM 1222 / NCTC 11817 / S12).